The chain runs to 210 residues: Chloramphenicol acetyltransferase (210 aa).

Residue H79 is part of the active site.

It belongs to the transferase hexapeptide repeat family.

It catalyses the reaction chloramphenicol + acetyl-CoA = chloramphenicol 3-acetate + CoA. This enzyme is an effector of chloramphenicol resistance in bacteria. The polypeptide is Chloramphenicol acetyltransferase (catB4) (Klebsiella aerogenes (Enterobacter aerogenes)).